A 214-amino-acid polypeptide reads, in one-letter code: Orotate phosphoribosyltransferase (214 aa).

Lys26 contributes to the 5-phospho-alpha-D-ribose 1-diphosphate binding site. Residue 34–35 (FF) participates in orotate binding. 5-phospho-alpha-D-ribose 1-diphosphate is bound by residues 72-73 (YK), Arg99, Lys100, Lys103, His105, and 124-132 (DDVITAGTA). Orotate contacts are provided by Thr128 and Arg156.

It belongs to the purine/pyrimidine phosphoribosyltransferase family. PyrE subfamily. In terms of assembly, homodimer. Requires Mg(2+) as cofactor.

It carries out the reaction orotidine 5'-phosphate + diphosphate = orotate + 5-phospho-alpha-D-ribose 1-diphosphate. The protein operates within pyrimidine metabolism; UMP biosynthesis via de novo pathway; UMP from orotate: step 1/2. Functionally, catalyzes the transfer of a ribosyl phosphate group from 5-phosphoribose 1-diphosphate to orotate, leading to the formation of orotidine monophosphate (OMP). This is Orotate phosphoribosyltransferase from Pseudoalteromonas translucida (strain TAC 125).